A 308-amino-acid polypeptide reads, in one-letter code: Probable manganese-dependent inorganic pyrophosphatase (308 aa).

The Mn(2+) site is built by His-9, Asp-13, Asp-15, Asp-74, His-96, and Asp-148.

It belongs to the PPase class C family. The cofactor is Mn(2+).

It localises to the cytoplasm. The catalysed reaction is diphosphate + H2O = 2 phosphate + H(+). In Oceanobacillus iheyensis (strain DSM 14371 / CIP 107618 / JCM 11309 / KCTC 3954 / HTE831), this protein is Probable manganese-dependent inorganic pyrophosphatase.